The chain runs to 150 residues: Phosphoribosyl-AMP cyclohydrolase (150 aa).

Asp93 contributes to the Mg(2+) binding site. A Zn(2+)-binding site is contributed by Cys94. The Mg(2+) site is built by Asp95 and Asp97. The Zn(2+) site is built by Cys112 and Cys119.

This sequence belongs to the PRA-CH family. Homodimer. The cofactor is Mg(2+). Zn(2+) is required as a cofactor.

The protein resides in the cytoplasm. The enzyme catalyses 1-(5-phospho-beta-D-ribosyl)-5'-AMP + H2O = 1-(5-phospho-beta-D-ribosyl)-5-[(5-phospho-beta-D-ribosylamino)methylideneamino]imidazole-4-carboxamide. It functions in the pathway amino-acid biosynthesis; L-histidine biosynthesis; L-histidine from 5-phospho-alpha-D-ribose 1-diphosphate: step 3/9. Functionally, catalyzes the hydrolysis of the adenine ring of phosphoribosyl-AMP. The chain is Phosphoribosyl-AMP cyclohydrolase from Rhizobium etli (strain CIAT 652).